The sequence spans 271 residues: MSKLASPQSVRALLERHGLFADKRFGQNFLVSEVHLRRIVEAARPFTGPVFEVGPGLGALTRALLEAGAEVTAIEKDLRLRPVLEETLSGLPVRLVFQDALLYPWEEVPQGSLLVANLPYHIATPLVTRLLKTGRFARLVFLVQKEVAERMTARPKTPAYGVLTLRVAHHAVAERLFDLPPGAFFPPPKVWSSLVRLTPTGAPDDPGLFRLVEAAFGKRRKTLLNALAAAGYPKARVEEALRALGLPPRVRAEELDLEAFRRLREGLEGAV.

Residues N28, L30, G54, E75, D99, and N117 each coordinate S-adenosyl-L-methionine.

This sequence belongs to the class I-like SAM-binding methyltransferase superfamily. rRNA adenine N(6)-methyltransferase family. RsmA subfamily.

It localises to the cytoplasm. The catalysed reaction is adenosine(1518)/adenosine(1519) in 16S rRNA + 4 S-adenosyl-L-methionine = N(6)-dimethyladenosine(1518)/N(6)-dimethyladenosine(1519) in 16S rRNA + 4 S-adenosyl-L-homocysteine + 4 H(+). Specifically dimethylates two adjacent adenosines (A1518 and A1519) in the loop of a conserved hairpin near the 3'-end of 16S rRNA in the 30S particle. May play a critical role in biogenesis of 30S subunits. This is Ribosomal RNA small subunit methyltransferase A from Thermus thermophilus (strain ATCC BAA-163 / DSM 7039 / HB27).